The sequence spans 151 residues: Odorant-binding protein (151 aa).

2 cysteine pairs are disulfide-bonded: Cys38–Cys42 and Cys57–Cys149.

This sequence belongs to the calycin superfamily. Lipocalin family. In terms of tissue distribution, expressed in salivary glands, hair and urine.

The protein localises to the secreted. Functionally, may act as a pheromone. The chain is Odorant-binding protein from Phodopus sungorus (Striped hairy-footed hamster).